The following is a 740-amino-acid chain: Rho GTPase-activating protein 92B (740 aa).

Residues 13–246 form the BAR domain; it reads ENLSRSSKSD…IQDTIQGTEK (234 aa). The segment at 49–74 is disordered; it reads LPALSGGGGSGSGSSEEQDKRTKKNS. The Rho-GAP domain maps to 251-448; it reads TSLKEHLTST…LLISQWDYFF (198 aa). The disordered stretch occupies residues 467–740; the sequence is GKSKSNSSNE…PPPTNWKSSD (274 aa). Phosphoserine is present on residues Ser469 and Ser473. A compositionally biased stretch (polar residues) spans 506–520; it reads TTNGNGIIMTTSQTS. Positions 566–577 are enriched in pro residues; sequence PLPPPPVTPAKP. Position 593 is a phosphoserine (Ser593). Residue Thr595 is modified to Phosphothreonine. The segment covering 643–655 has biased composition (polar residues); sequence TTPTQATIDNGNG. Residues 659–672 show a composition bias toward basic and acidic residues; the sequence is FKTEHFLDKLRQEN. The span at 673-686 shows a compositional bias: polar residues; the sequence is GETNGTREVSSTTK. Residues 694 to 713 show a composition bias toward low complexity; the sequence is PPATAADQNQQQAQPQVTTP. Position 715 is a phosphoserine (Ser715). Thr721 is modified (phosphothreonine). The span at 725-734 shows a compositional bias: pro residues; that stretch reads PTVPAPPPPT. Residues Ser738 and Ser739 each carry the phosphoserine modification.

In terms of biological role, GTPase activator for the Rho-type GTPases by converting them to an inactive GDP-bound state. This is Rho GTPase-activating protein 92B (RhoGAP92B) from Drosophila melanogaster (Fruit fly).